The sequence spans 213 residues: Orotate phosphoribosyltransferase (213 aa).

A 5-phospho-alpha-D-ribose 1-diphosphate-binding site is contributed by Lys26. 34–35 (FF) is a binding site for orotate. 5-phospho-alpha-D-ribose 1-diphosphate-binding positions include 72–73 (YK), Arg99, Lys100, Lys103, His105, and 124–132 (DDVITAGTS). Residues Thr128 and Arg156 each coordinate orotate.

It belongs to the purine/pyrimidine phosphoribosyltransferase family. PyrE subfamily. Homodimer. Mg(2+) serves as cofactor.

The catalysed reaction is orotidine 5'-phosphate + diphosphate = orotate + 5-phospho-alpha-D-ribose 1-diphosphate. Its pathway is pyrimidine metabolism; UMP biosynthesis via de novo pathway; UMP from orotate: step 1/2. Its function is as follows. Catalyzes the transfer of a ribosyl phosphate group from 5-phosphoribose 1-diphosphate to orotate, leading to the formation of orotidine monophosphate (OMP). This Methylococcus capsulatus (strain ATCC 33009 / NCIMB 11132 / Bath) protein is Orotate phosphoribosyltransferase.